Consider the following 1188-residue polypeptide: DNA-directed RNA polymerase subunit beta (1188 aa).

It belongs to the RNA polymerase beta chain family. The RNAP catalytic core consists of 2 alpha, 1 beta, 1 beta' and 1 omega subunit. When a sigma factor is associated with the core the holoenzyme is formed, which can initiate transcription.

The catalysed reaction is RNA(n) + a ribonucleoside 5'-triphosphate = RNA(n+1) + diphosphate. Functionally, DNA-dependent RNA polymerase catalyzes the transcription of DNA into RNA using the four ribonucleoside triphosphates as substrates. The sequence is that of DNA-directed RNA polymerase subunit beta from Streptococcus gordonii (strain Challis / ATCC 35105 / BCRC 15272 / CH1 / DL1 / V288).